A 228-amino-acid polypeptide reads, in one-letter code: Small ribosomal subunit protein uS3 (228 aa).

In terms of domain architecture, KH type-2 spans 39–107 (TREYLQDKLK…PVHINIEEIR (69 aa)).

The protein belongs to the universal ribosomal protein uS3 family. Part of the 30S ribosomal subunit. Forms a tight complex with proteins S10 and S14.

In terms of biological role, binds the lower part of the 30S subunit head. Binds mRNA in the 70S ribosome, positioning it for translation. The protein is Small ribosomal subunit protein uS3 of Pseudomonas putida (strain ATCC 700007 / DSM 6899 / JCM 31910 / BCRC 17059 / LMG 24140 / F1).